Here is a 231-residue protein sequence, read N- to C-terminus: GTP-binding protein RHO3 (231 aa).

23–30 is a GTP binding site; it reads GDGACGKT. An Effector region motif is present at residues 45 to 53; it reads YEPTVFENY. GTP contacts are provided by residues 70-74 and 128-131; these read DTAGQ and LKCD. Residues 139 to 150 are compositionally biased toward polar residues; the sequence is SNAITPNNIQQD. Residues 139-165 are disordered; sequence SNAITPNNIQQDNSVSNDNGNNINSTS. Positions 151 to 165 are enriched in low complexity; it reads NSVSNDNGNNINSTS. Cys-228 carries the post-translational modification Cysteine methyl ester. A lipid anchor (S-farnesyl cysteine) is attached at Cys-228. Positions 229-231 are cleaved as a propeptide — removed in mature form; the sequence is TIM.

It belongs to the small GTPase superfamily. Rho family. As to quaternary structure, interacts with TOS7.

The protein localises to the cell membrane. Activity is positively regulated by the GTPase activating protein (GAP) RGD1. Functionally, plays an important role in cell growth. Required to keep the uninucleated state. Modulates morphogenesis during bud growth via directing organization of the actin cytoskeleton and the position of the secretory machinery for exocytosis. The polypeptide is GTP-binding protein RHO3 (Saccharomyces cerevisiae (strain ATCC 204508 / S288c) (Baker's yeast)).